The primary structure comprises 51 residues: Large ribosomal subunit protein bL33 (51 aa).

This sequence belongs to the bacterial ribosomal protein bL33 family.

This Pseudoalteromonas translucida (strain TAC 125) protein is Large ribosomal subunit protein bL33.